A 519-amino-acid polypeptide reads, in one-letter code: Cell division cycle protein 20 homolog B (519 aa).

The segment covering 79–98 (QSQTRALSSDSFGEEQSTTY) has biased composition (polar residues). The tract at residues 79-133 (QSQTRALSSDSFGEEQSTTYLPEASGSVLKTPPEKETLTLGSRKEQLKTPSKGIS) is disordered. Over residues 110 to 125 (PPEKETLTLGSRKEQL) the composition is skewed to basic and acidic residues. WD repeat units follow at residues 229–266 (RNDYYLNILDWSFQNLVAIALGSAVYIWNGENHNGIEN), 271–310 (LTCNYISSVSWIKEGTCLAVGTSEGEVQLWDVVTKKRLRN), 311–341 (MLGHLSVVGALSWNHFILSSGSRLGRVYHHD), 353–392 (RHKQAVCALKWSPDGRLLSSGCSDGLLTIWPHDPGASAQG), 399–441 (TQST…SIQT), 443–484 (STNS…RSGG), and 487–519 (GHRGRVLHLSLSPDQTRVFSAAADGTASVWNCY).

The protein belongs to the WD repeat CDC20/Fizzy family. In terms of tissue distribution, expressed in multiciliated cells (MCCs).

Its subcellular location is the cytoplasm. In terms of biological role, protein regulator of centriole-deuterosome disengagement and subsequently participates in the ciliogenesis in multiciliated cells (MCCs). The sequence is that of Cell division cycle protein 20 homolog B from Homo sapiens (Human).